The sequence spans 237 residues: Orotidine 5'-phosphate decarboxylase (237 aa).

Substrate is bound by residues Asp10, Lys33, 60–69, Thr124, Arg186, Gln195, Gly215, and Arg216; that span reads DLKLHDIPNT. The active-site Proton donor is Lys62.

The protein belongs to the OMP decarboxylase family. Type 1 subfamily. In terms of assembly, homodimer.

It catalyses the reaction orotidine 5'-phosphate + H(+) = UMP + CO2. It functions in the pathway pyrimidine metabolism; UMP biosynthesis via de novo pathway; UMP from orotate: step 2/2. Catalyzes the decarboxylation of orotidine 5'-monophosphate (OMP) to uridine 5'-monophosphate (UMP). The chain is Orotidine 5'-phosphate decarboxylase from Lactiplantibacillus plantarum (strain ATCC BAA-793 / NCIMB 8826 / WCFS1) (Lactobacillus plantarum).